A 151-amino-acid polypeptide reads, in one-letter code: Homeobox protein HD-1 (151 aa).

Positions 87 to 146 (ESIKSRRFPKFITEALERSFEIDQYPSEAEKARLAKICKLSTKQINNWFTNKRNRTKGHE) form a DNA-binding region, homeobox.

The protein resides in the nucleus. This is Homeobox protein HD-1 (HD-1) from Encephalitozoon cuniculi (strain GB-M1) (Microsporidian parasite).